The primary structure comprises 425 residues: GTPase Obg (425 aa).

In terms of domain architecture, Obg spans 1–158; sequence MFRDSAKIYV…YSLILEMKMI (158 aa). Residues 159–330 enclose the OBG-type G domain; that stretch reads ADVGLVGYPN…LLYAVSETLK (172 aa). GTP is bound by residues 165 to 172, 190 to 194, 212 to 215, 282 to 285, and 311 to 313; these read GYPNVGKS, FTTLV, DIPG, NKMD, and SAA. Residues serine 172 and threonine 192 each contribute to the Mg(2+) site. Residues 348–425 form the OCT domain; it reads YKVQEEKPFE…IYDTEFDYTR (78 aa).

It belongs to the TRAFAC class OBG-HflX-like GTPase superfamily. OBG GTPase family. In terms of assembly, monomer. Mg(2+) is required as a cofactor.

It localises to the cytoplasm. In terms of biological role, an essential GTPase which binds GTP, GDP and possibly (p)ppGpp with moderate affinity, with high nucleotide exchange rates and a fairly low GTP hydrolysis rate. Plays a role in control of the cell cycle, stress response, ribosome biogenesis and in those bacteria that undergo differentiation, in morphogenesis control. The chain is GTPase Obg from Ruminiclostridium cellulolyticum (strain ATCC 35319 / DSM 5812 / JCM 6584 / H10) (Clostridium cellulolyticum).